We begin with the raw amino-acid sequence, 310 residues long: Protease HtpX homolog (310 aa).

Transmembrane regions (helical) follow at residues 7–27 (SVML…LIGG) and 29–49 (AGMT…YWYS). Zn(2+) is bound at residue histidine 131. The active site involves glutamate 132. Histidine 135 is a Zn(2+) binding site. Helical transmembrane passes span 141-161 (ILIG…ASMA) and 178-198 (PLGF…AALI). Zn(2+) is bound at residue glutamate 207. A disordered region spans residues 277-310 (LTGARPQSGGAPSGPERTARNAEDSAKDFWDSLK). Over residues 293–310 (RTARNAEDSAKDFWDSLK) the composition is skewed to basic and acidic residues.

This sequence belongs to the peptidase M48B family. Zn(2+) serves as cofactor.

The protein localises to the cell inner membrane. This chain is Protease HtpX homolog, found in Desulfatibacillum aliphaticivorans.